The primary structure comprises 348 residues: D-alanine--D-alanine ligase (348 aa).

Positions 136 to 344 constitute an ATP-grasp domain; that stretch reads KSVFKSYNLP…LEKLVANLIE (209 aa). 171–226 contacts ATP; the sequence is NKIISYPCFIKPANLGSSVGITKAYSKEEFIAGIEFAAKYDERIIVEKSIEGRELE. Mg(2+)-binding residues include Asp297, Glu311, and Asn313.

It belongs to the D-alanine--D-alanine ligase family. The cofactor is Mg(2+). Mn(2+) is required as a cofactor.

Its subcellular location is the cytoplasm. The enzyme catalyses 2 D-alanine + ATP = D-alanyl-D-alanine + ADP + phosphate + H(+). It functions in the pathway cell wall biogenesis; peptidoglycan biosynthesis. Its function is as follows. Cell wall formation. The polypeptide is D-alanine--D-alanine ligase (Prochlorococcus marinus (strain NATL2A)).